The following is a 58-amino-acid chain: Proteinase inhibitor PSKP-2 (58 aa).

The 58-residue stretch at 1-58 (VIEPDCKKYEGKKCPPDIALVCGTNGREYYNECALCVFIRDSTLKADKAIKIKKWGKC) folds into the Kazal-like domain. 3 cysteine pairs are disulfide-bonded: Cys6-Cys36, Cys14-Cys33, and Cys22-Cys58.

In terms of tissue distribution, skin.

It is found in the secreted. Functionally, may have a role in mucosal defense against microbes by interacting directly with their membranes. In Phyllomedusa sauvagei (Sauvage's leaf frog), this protein is Proteinase inhibitor PSKP-2.